Reading from the N-terminus, the 182-residue chain is Mu-like prophage FluMu protein gp45 (182 aa).

The disordered stretch occupies residues 159–182 (TDHQSSGISGKNHDHEERVGKPVP). A compositionally biased stretch (basic and acidic residues) spans 169–182 (KNHDHEERVGKPVP).

It to phage Mu protein gp45.

The polypeptide is Mu-like prophage FluMu protein gp45 (Haemophilus influenzae (strain ATCC 51907 / DSM 11121 / KW20 / Rd)).